Reading from the N-terminus, the 276-residue chain is Undecaprenyl-diphosphatase 2 (276 aa).

The next 8 membrane-spanning stretches (helical) occupy residues M1–V21, Q44–F64, G87–L107, V114–V134, M150–F170, A190–L210, L220–F240, and L251–L271.

Belongs to the UppP family.

It is found in the cell inner membrane. The catalysed reaction is di-trans,octa-cis-undecaprenyl diphosphate + H2O = di-trans,octa-cis-undecaprenyl phosphate + phosphate + H(+). Catalyzes the dephosphorylation of undecaprenyl diphosphate (UPP). Confers resistance to bacitracin. The protein is Undecaprenyl-diphosphatase 2 of Burkholderia ambifaria (strain ATCC BAA-244 / DSM 16087 / CCUG 44356 / LMG 19182 / AMMD) (Burkholderia cepacia (strain AMMD)).